The primary structure comprises 394 residues: Elongation factor Tu (394 aa).

The tr-type G domain maps to 10 to 204 (KPHVNVGTIG…YLDSYIPEPE (195 aa)). Positions 19–26 (GHVDHGKT) are G1. A GTP-binding site is contributed by 19 to 26 (GHVDHGKT). T26 is a binding site for Mg(2+). The tract at residues 60 to 64 (GITIN) is G2. Residues 81-84 (DCPG) form a G3 region. GTP contacts are provided by residues 81 to 85 (DCPGH) and 136 to 139 (NKCD). Positions 136 to 139 (NKCD) are G4. The interval 174–176 (SAL) is G5.

Belongs to the TRAFAC class translation factor GTPase superfamily. Classic translation factor GTPase family. EF-Tu/EF-1A subfamily. Monomer.

It is found in the cytoplasm. It catalyses the reaction GTP + H2O = GDP + phosphate + H(+). GTP hydrolase that promotes the GTP-dependent binding of aminoacyl-tRNA to the A-site of ribosomes during protein biosynthesis. This chain is Elongation factor Tu, found in Enterobacter sp. (strain 638).